Here is a 289-residue protein sequence, read N- to C-terminus: Pantothenate synthetase (289 aa).

Met-30–His-37 is an ATP binding site. The active-site Proton donor is His-37. Residue Gln-61 participates in (R)-pantoate binding. Beta-alanine is bound at residue Gln-61. An ATP-binding site is contributed by Gly-147–Asp-150. Gln-153 is a (R)-pantoate binding site. Residues Val-176 and Cys-184–Arg-187 contribute to the ATP site.

This sequence belongs to the pantothenate synthetase family. In terms of assembly, homodimer.

The protein resides in the cytoplasm. The enzyme catalyses (R)-pantoate + beta-alanine + ATP = (R)-pantothenate + AMP + diphosphate + H(+). It functions in the pathway cofactor biosynthesis; (R)-pantothenate biosynthesis; (R)-pantothenate from (R)-pantoate and beta-alanine: step 1/1. In terms of biological role, catalyzes the condensation of pantoate with beta-alanine in an ATP-dependent reaction via a pantoyl-adenylate intermediate. In Brucella anthropi (strain ATCC 49188 / DSM 6882 / CCUG 24695 / JCM 21032 / LMG 3331 / NBRC 15819 / NCTC 12168 / Alc 37) (Ochrobactrum anthropi), this protein is Pantothenate synthetase.